The primary structure comprises 325 residues: Flotillin-like protein FloA (325 aa).

2 helical membrane-spanning segments follow: residues 4–24 and 26–46; these read LGIVFLAAVVLLFVFLFFSFI and VGLWISAWAAGVRVPLLTLVA.

Belongs to the flotillin-like FloA family. Homooligomerizes.

The protein resides in the cell membrane. It localises to the membrane raft. Its function is as follows. Found in functional membrane microdomains (FMM) that may be equivalent to eukaryotic membrane rafts. FMMs are highly dynamic and increase in number as cells age. Flotillins are thought to be important factors in membrane fluidity. The protein is Flotillin-like protein FloA of Thermus thermophilus (strain ATCC BAA-163 / DSM 7039 / HB27).